A 183-amino-acid polypeptide reads, in one-letter code: UPF0725 protein At4g11700 (183 aa).

This sequence belongs to the UPF0725 (EMB2204) family.

The polypeptide is UPF0725 protein At4g11700 (Arabidopsis thaliana (Mouse-ear cress)).